A 202-amino-acid polypeptide reads, in one-letter code: Small ribosomal subunit protein uS4 (202 aa).

The segment covering 1-13 (MSRYRGPRLRVTR) has biased composition (basic residues). Residues 1-42 (MSRYRGPRLRVTRRLGELPGLTRKASKKSNPPGQHGQARRKR) are disordered. The region spanning 90 to 152 (NRLDNVCFRL…KASKKLVEGN (63 aa)) is the S4 RNA-binding domain.

It belongs to the universal ribosomal protein uS4 family. In terms of assembly, part of the 30S ribosomal subunit. Contacts protein S5. The interaction surface between S4 and S5 is involved in control of translational fidelity.

Functionally, one of the primary rRNA binding proteins, it binds directly to 16S rRNA where it nucleates assembly of the body of the 30S subunit. With S5 and S12 plays an important role in translational accuracy. The sequence is that of Small ribosomal subunit protein uS4 from Prochlorococcus marinus (strain MIT 9312).